Consider the following 544-residue polypeptide: Chaperonin GroEL 1 (544 aa).

ATP contacts are provided by residues 29-32 (TLGP), 86-90 (DGTTT), Gly413, and Asp495.

It belongs to the chaperonin (HSP60) family. In terms of assembly, forms a cylinder of 14 subunits composed of two heptameric rings stacked back-to-back. Interacts with the co-chaperonin GroES.

It is found in the cytoplasm. The enzyme catalyses ATP + H2O + a folded polypeptide = ADP + phosphate + an unfolded polypeptide.. Functionally, together with its co-chaperonin GroES, plays an essential role in assisting protein folding. The GroEL-GroES system forms a nano-cage that allows encapsulation of the non-native substrate proteins and provides a physical environment optimized to promote and accelerate protein folding. The protein is Chaperonin GroEL 1 of Synechococcus sp. (strain ATCC 27144 / PCC 6301 / SAUG 1402/1) (Anacystis nidulans).